The following is a 517-amino-acid chain: B3 domain-containing protein REM1 (517 aa).

Positions 7-92 form a DNA-binding region, TF-B3 1; sequence FSLFQQKFRT…VFHVAVVSPS (86 aa). Residues 115 to 140 are compositionally biased toward acidic residues; the sequence is DDVDDDDYGQDDEDDDDDDDEGEDNI. Positions 115 to 158 are disordered; it reads DDVDDDDYGQDDEDDDDDDDEGEDNIENISEKTDKRQEADSSSD. The span at 143–157 shows a compositional bias: basic and acidic residues; that stretch reads ISEKTDKRQEADSSS. DNA-binding regions (TF-B3) lie at residues 162–259 and 285–385; these read FITA…CPQE and FLIV…FCSK. The segment at 393–415 is disordered; sequence GKGNQRTRKKRACETAPQPRNVK.

In terms of tissue distribution, expressed in the shoot apical meristem (SAM), in the inflorescence apex and flowers.

Its subcellular location is the nucleus. Its function is as follows. May play a role in flower development. This is B3 domain-containing protein REM1 (REM1) from Arabidopsis thaliana (Mouse-ear cress).